The sequence spans 108 residues: Virulence-associated protein I (108 aa).

The 56-residue stretch at 19 to 74 (LREEYLKPMGLSAHALAKALHVSPSRINEIVREQRGITADTALRLVRYFGGDAQSW) folds into the HTH cro/C1-type domain. A DNA-binding region (H-T-H motif) is located at residues 30–49 (SAHALAKALHVSPSRINEIV).

This sequence belongs to the VapA/VapI family.

This is Virulence-associated protein I (vapI) from Dichelobacter nodosus (Bacteroides nodosus).